Here is a 534-residue protein sequence, read N- to C-terminus: 5,6-dihydroxyindole-2-carboxylic acid oxidase (534 aa).

The signal sequence occupies residues 1–23; sequence MLGPATFLPLTAALLLLIPGGRA. At 24 to 477 the chain is on the lumenal, melanosome side; it reads QFPRQCVTPE…WPSRALNFTE (454 aa). 5 disulfide bridges follow: Cys29–Cys40, Cys41–Cys65, Cys56–Cys99, Cys101–Cys110, and Cys113–Cys122. Residues Asn96 and Asn104 are each glycosylated (N-linked (GlcNAc...) asparagine). N-linked (GlcNAc...) asparagine glycosylation is found at Asn175 and Asn181. Residues His192, His215, and His224 each coordinate Zn(2+). 2 cysteine pairs are disulfide-bonded: Cys258–Cys261 and Cys290–Cys303. 2 N-linked (GlcNAc...) asparagine glycosylation sites follow: Asn304 and Asn350. Residues His377 and His381 each contribute to the Zn(2+) site. Residue Asn385 is glycosylated (N-linked (GlcNAc...) asparagine). His404 lines the Zn(2+) pocket. A helical transmembrane segment spans residues 478 to 501; that stretch reads IITIAVVAALVLVAVIFAAASCAV. The Cytoplasmic portion of the chain corresponds to 502 to 534; the sequence is HRSRKDDVHQPLLGEQYPRYSEEYERDASQSAV.

It belongs to the tyrosinase family. It depends on Cu(2+) as a cofactor. Requires Zn(2+) as cofactor.

The protein localises to the melanosome membrane. The enzyme catalyses 2 5,6-dihydroxyindole-2-carboxylate + O2 = 2 indole-5,6-quinone-2-carboxylate + 2 H2O. It participates in pigment biosynthesis; melanin biosynthesis. Functionally, plays a role in melanin biosynthesis. Catalyzes the oxidation of 5,6-dihydroxyindole-2-carboxylic acid (DHICA) into indole-5,6-quinone-2-carboxylic acid. May regulate or influence the type of melanin synthesized. Also to a lower extent, capable of hydroxylating tyrosine and producing melanin. This Ambystoma mexicanum (Axolotl) protein is 5,6-dihydroxyindole-2-carboxylic acid oxidase (TYRP1).